The sequence spans 606 residues: Elongation factor 4 (606 aa).

In terms of domain architecture, tr-type G spans 7–189 (SRIRNFCIIA…AVVDRVPPPK (183 aa)). GTP-binding positions include 19–24 (DHGKST) and 136–139 (NKID).

This sequence belongs to the TRAFAC class translation factor GTPase superfamily. Classic translation factor GTPase family. LepA subfamily.

Its subcellular location is the cell inner membrane. The enzyme catalyses GTP + H2O = GDP + phosphate + H(+). Its function is as follows. Required for accurate and efficient protein synthesis under certain stress conditions. May act as a fidelity factor of the translation reaction, by catalyzing a one-codon backward translocation of tRNAs on improperly translocated ribosomes. Back-translocation proceeds from a post-translocation (POST) complex to a pre-translocation (PRE) complex, thus giving elongation factor G a second chance to translocate the tRNAs correctly. Binds to ribosomes in a GTP-dependent manner. The protein is Elongation factor 4 of Parasynechococcus marenigrum (strain WH8102).